A 1353-amino-acid polypeptide reads, in one-letter code: Ankyrin repeat domain-containing protein 36B (1353 aa).

ANK repeat units follow at residues 19–48 (YHLK…DANK), 52–81 (KERT…ELNL), 85–114 (EDRT…DPNI), 118–147 (FGRT…NIEE), 151–180 (NEYQ…NVNA), and 184–213 (LGRS…DVFS). 2 disordered regions span residues 249–307 (PINS…KDSV) and 349–607 (MGGG…KATS). The span at 250–259 (INSNPVSPQK) shows a compositional bias: polar residues. Basic and acidic residues-rich tracts occupy residues 260–272 (QRAE…DKDS) and 295–306 (PAEKATSDEKDS). 2 stretches are compositionally biased toward polar residues: residues 355-367 (GTVS…ASKT) and 389-400 (GTVSSQKQQALK). Composition is skewed to basic and acidic residues over residues 436 to 455 (TSDE…DGEI) and 471 to 491 (SVKE…EKSR). Positions 579–600 (VSNIPTEIKDGQQSGTVSSQKQ) are enriched in polar residues. 4 coiled-coil regions span residues 731–762 (AEQD…QIHS), 821–908 (IKLK…YRIE), 937–1055 (SETD…DHDQ), and 1119–1344 (VFEH…LQHS).

Belongs to the ANKRD36 family.

This chain is Ankyrin repeat domain-containing protein 36B (ANKRD36B), found in Homo sapiens (Human).